Consider the following 732-residue polypeptide: Phosphoribosylformylglycinamidine synthase subunit PurL (732 aa).

Residue His42 is part of the active site. ATP contacts are provided by Tyr45 and Lys84. Glu86 is a binding site for Mg(2+). Residues 87–90 (SHNH) and Arg109 each bind substrate. His88 (proton acceptor) is an active-site residue. Asp110 contacts Mg(2+). Gln238 lines the substrate pocket. Asp266 is a binding site for Mg(2+). Residue 310-312 (ESQ) participates in substrate binding. ATP contacts are provided by Asp496 and Gly533. Residue Asn534 coordinates Mg(2+). Ser536 contacts substrate.

This sequence belongs to the FGAMS family. As to quaternary structure, monomer. Part of the FGAM synthase complex composed of 1 PurL, 1 PurQ and 2 PurS subunits.

It is found in the cytoplasm. The enzyme catalyses N(2)-formyl-N(1)-(5-phospho-beta-D-ribosyl)glycinamide + L-glutamine + ATP + H2O = 2-formamido-N(1)-(5-O-phospho-beta-D-ribosyl)acetamidine + L-glutamate + ADP + phosphate + H(+). It participates in purine metabolism; IMP biosynthesis via de novo pathway; 5-amino-1-(5-phospho-D-ribosyl)imidazole from N(2)-formyl-N(1)-(5-phospho-D-ribosyl)glycinamide: step 1/2. In terms of biological role, part of the phosphoribosylformylglycinamidine synthase complex involved in the purines biosynthetic pathway. Catalyzes the ATP-dependent conversion of formylglycinamide ribonucleotide (FGAR) and glutamine to yield formylglycinamidine ribonucleotide (FGAM) and glutamate. The FGAM synthase complex is composed of three subunits. PurQ produces an ammonia molecule by converting glutamine to glutamate. PurL transfers the ammonia molecule to FGAR to form FGAM in an ATP-dependent manner. PurS interacts with PurQ and PurL and is thought to assist in the transfer of the ammonia molecule from PurQ to PurL. This chain is Phosphoribosylformylglycinamidine synthase subunit PurL, found in Campylobacter hominis (strain ATCC BAA-381 / DSM 21671 / CCUG 45161 / LMG 19568 / NCTC 13146 / CH001A).